The sequence spans 551 residues: MKDIEIAQQVTPEPITAIAAKAGLTVDQIDQYGSTKAKLKLPLPVKKTQRNLILVTSINPTPAGEGKSTVTIGLGDALTKIGKSTMIALREPSLGPVMGMKGGATGGGYSQVIPMEDINLHFTGDMHALTAANNTLAALIDNHIQQGNQLGIDQRRIQWKRALDINDRALRHTVIGLGGATSGVPREDGFDITVASELMAILCLSENIADLKQRVNRIVIGYTHDRQPVTVADLNVGGAITLLLKDALRPNLVQTLAHTPALVHGGPFANIAHGCNSVLATQAGLNLADYTVTEAGFGADLGGQKFMDINVPAVGQAPNAVVIVATIRALKLHGGVALQDLATENVAALKAGAANLGHHIHAMQRYGVPVVVAINEFTADTDAEIHAVKDYCADLGVDAVLADVWGRGGDGATDLAAAVVDLCAQPSHFQPLSPADADLKTKINDIVTKTYGGANVEYSAKAQRQLRTFAKQGWDHLPVCMAKTQYSLSDDPKRLGAPTGFTINVREFVPKLGAGFIVALTGNVLTMPGLPKHPAALDMDISDDGKISGLF.

61–68 (TPAGEGKS) serves as a coordination point for ATP.

Belongs to the formate--tetrahydrofolate ligase family.

It catalyses the reaction (6S)-5,6,7,8-tetrahydrofolate + formate + ATP = (6R)-10-formyltetrahydrofolate + ADP + phosphate. It functions in the pathway one-carbon metabolism; tetrahydrofolate interconversion. The protein is Formate--tetrahydrofolate ligase of Lactiplantibacillus plantarum (strain ATCC BAA-793 / NCIMB 8826 / WCFS1) (Lactobacillus plantarum).